Reading from the N-terminus, the 378-residue chain is Apolipoprotein A-IV (378 aa).

The signal sequence occupies residues 1 to 20; it reads MFLKAVVLTLSLVAITGARA. Tandem repeats lie at residues 33–54, 60–81, 82–98, 110–130, 131–152, 153–174, 175–196, 197–218, 219–240, 241–262, 263–280, 281–302, and 303–324. The segment at 33–324 is 13 X 22 AA approximate tandem repeats; the sequence is DYFSQLSNNA…QVEELRQKLG (292 aa). Positions 354–378 are disordered; that stretch reads EKESQDTPVALPKQEQEQSAVPLES.

It belongs to the apolipoprotein A1/A4/E family. In terms of assembly, homodimer.

It is found in the secreted. Its function is as follows. May have a role in chylomicrons and VLDL secretion and catabolism. Required for efficient activation of lipoprotein lipase by ApoC-II; potent activator of LCAT. Apoa-IV is a major component of HDL and chylomicrons. This Canis lupus familiaris (Dog) protein is Apolipoprotein A-IV.